Reading from the N-terminus, the 410-residue chain is Argininosuccinate synthase (410 aa).

6-14 serves as a coordination point for ATP; sequence AYSGGLDTS. An L-citrulline-binding site is contributed by tyrosine 84. Glycine 114 is an ATP binding site. Residues threonine 116, asparagine 120, and aspartate 121 each contribute to the L-aspartate site. L-citrulline is bound at residue asparagine 120. Positions 124, 169, 178, 254, and 266 each coordinate L-citrulline.

The protein belongs to the argininosuccinate synthase family. Type 1 subfamily. Homotetramer.

The protein localises to the cytoplasm. It carries out the reaction L-citrulline + L-aspartate + ATP = 2-(N(omega)-L-arginino)succinate + AMP + diphosphate + H(+). It functions in the pathway amino-acid biosynthesis; L-arginine biosynthesis; L-arginine from L-ornithine and carbamoyl phosphate: step 2/3. In Pyrococcus furiosus (strain ATCC 43587 / DSM 3638 / JCM 8422 / Vc1), this protein is Argininosuccinate synthase.